Reading from the N-terminus, the 231-residue chain is MKVCNMQKGTLPVSRHHAYDGVVIKRIEKELCKTIKDRDTESKKKAICVIKEATKKAESLRIDAVCDGYQIGIQTAFEHIIDYICEWKLKQNENRRNIEDYITSLLSENLHDERIISTLLEQWLSSLRNTVTELKVVLPKCNLALRKKLELDLHKYRSDVKIILKYSEGNNYIFCSGNQVVEFSPQDVISGVKIELAEKLTKNDKKYFKELAHKKLRQIAEDLLKENPVND.

In terms of assembly, the core secretion machinery of the T3SS is composed of approximately 20 different proteins, including cytoplasmic components, a base, an export apparatus and a needle. This subunit is part of the cytosolic complex. Interacts directly with Spa47/SctN (T3SS ATPase) and Spa33/SctQ (the major sorting platform component). Homodimer in solution.

It is found in the cytoplasm. Functionally, component of the type III secretion system (T3SS), also called injectisome, which is used to inject bacterial effector proteins into eukaryotic host cells. Acts as a regulator of the Spa47/SctN ATPase activity. It down-regulates the ATPase activity of the oligomeric Spa47/SctN, while it up-regulates the activity of the monomeric form. Important for translocation of MxiH/SctF, the major needle component. The chain is Type 3 secretion system stator protein from Shigella flexneri.